A 982-amino-acid polypeptide reads, in one-letter code: Collagen alpha-1(I) chain (982 aa).

The segment at 1–982 is disordered; sequence GPMGPSGPRG…PGAPGPPGPP (982 aa). Residues 8-27 show a composition bias toward low complexity; the sequence is PRGFQGPPGEPGEPGASGPM. The span at 39–53 shows a compositional bias: basic and acidic residues; the sequence is NGDDGEAGKPGRPGE. A Phosphoserine modification is found at serine 81. 2 stretches are compositionally biased toward low complexity: residues 89–105 and 128–141; these read DAGPAGPKGEPGSPGEN and PAGARGNDGATGAA. The span at 143 to 155 shows a compositional bias: pro residues; that stretch reads PPGPTGPAGPPGF. A compositionally biased stretch (low complexity) spans 189–228; it reads AGAAGPAGNPGADGQPGAKGANGAPGIAGAPGFPGARGPS. Gly residues predominate over residues 294–303; it reads GERGGPGSRG. 9 stretches are compositionally biased toward low complexity: residues 304–335, 347–373, 382–401, 425–437, 513–526, 583–597, 610–640, 666–682, and 727–751; these read FPGADGVAGPKGPAGERGAPGPAGPKGSPGEA, KGITGSPGSPGPDGKTGPPGPAGQDGR, ARGQAGVMGFPGPKGAAGEP, AGAQGPPGSAGPA, APGAPGSQGAPGIQ, SGPSGPAGPTGARGA, AGFAGPPGADGQPGAKGEPGDAGAKGDAGPA, SAGPPGATGFPGAAGRV, and AGEKGSPGSDGPAGAPGTPGPQGIA. The residue at position 586 (serine 586) is a Phosphoserine. 2 stretches are compositionally biased toward pro residues: residues 792–802 and 838–853; these read PPGPIGPPGIA and AGPPGAPGAPGAPGPV. The span at 874-888 shows a compositional bias: low complexity; the sequence is IGPTGARGPAGPQGP. A compositionally biased stretch (basic and acidic residues) spans 889-900; that stretch reads RGDKGETGEQGD. Residues 916-940 show a composition bias toward low complexity; sequence PGEQGPAGASGPAGPRGPPGSAGAP. The span at 966–982 shows a compositional bias: pro residues; that stretch reads PRGPPGPPGAPGPPGPP.

It belongs to the fibrillar collagen family. In terms of assembly, trimers of one alpha 2(I) and two alpha 1(I) chains. In terms of processing, prolines at the third position of the tripeptide repeating unit (G-X-Y) are hydroxylated in some or all of the chains. Forms the fibrils of tendon, ligaments and bones. In bones, the fibrils are mineralized with calcium hydroxyapatite.

It localises to the secreted. It is found in the extracellular space. The protein resides in the extracellular matrix. Functionally, type I collagen is a member of group I collagen (fibrillar forming collagen). The polypeptide is Collagen alpha-1(I) chain (Toxodon sp).